Consider the following 592-residue polypeptide: Inactive heparanase-2 (592 aa).

Positions 1 to 41 (MRVLCAFPEAMPSSNSRPPACLAPGALYLALLLHLSLSSQA) are cleaved as a signal peptide. 2 N-linked (GlcNAc...) asparagine glycosylation sites follow: N254 and N392.

The protein belongs to the glycosyl hydrolase 79 family. As to quaternary structure, interacts with HPSE. Interacts with SDC1 (via glycan chains). In terms of tissue distribution, widely expressed, with the highest expression in brain, mammary gland, prostate, small intestine, testis and uterus. In the central nervous system, expressed in the spinal cord, caudate nucleus, thalamus, substantia nigra, medulla oblongata, putamen and pons. In the urinary bladder, expressed in longitudinal and circular layers of detrusor muscle. Found both in normal and cancer tissues.

It localises to the secreted. The protein localises to the extracellular space. It is found in the extracellular matrix. Binds heparin and heparan sulfate with high affinity, but lacks heparanase activity. Inhibits HPSE, possibly by competing for its substrates (in vitro). This Homo sapiens (Human) protein is Inactive heparanase-2 (HPSE2).